The chain runs to 194 residues: Imidazoleglycerol-phosphate dehydratase (194 aa).

This sequence belongs to the imidazoleglycerol-phosphate dehydratase family.

It localises to the cytoplasm. The enzyme catalyses D-erythro-1-(imidazol-4-yl)glycerol 3-phosphate = 3-(imidazol-4-yl)-2-oxopropyl phosphate + H2O. It participates in amino-acid biosynthesis; L-histidine biosynthesis; L-histidine from 5-phospho-alpha-D-ribose 1-diphosphate: step 6/9. The sequence is that of Imidazoleglycerol-phosphate dehydratase from Caldanaerobacter subterraneus subsp. tengcongensis (strain DSM 15242 / JCM 11007 / NBRC 100824 / MB4) (Thermoanaerobacter tengcongensis).